The chain runs to 343 residues: Glucokinase (343 aa).

21–26 (ADVGGT) is an ATP binding site.

Belongs to the bacterial glucokinase family.

Its subcellular location is the cytoplasm. It catalyses the reaction D-glucose + ATP = D-glucose 6-phosphate + ADP + H(+). This chain is Glucokinase, found in Cupriavidus pinatubonensis (strain JMP 134 / LMG 1197) (Cupriavidus necator (strain JMP 134)).